The sequence spans 118 residues: MVQGYIHGLDSYNINEASLLIRSDLVKVVEAITGNNDASYIFLLIIITIIFALTMYTSVQVLIRTMRTTISKSVMDDNLKKKYGFERMRNKKRKKRSNATDTAILMNTMLDDDSTDEF.

The helical transmembrane segment at 41-61 (IFLLIIITIIFALTMYTSVQV) threads the bilayer.

The protein resides in the host membrane. This is an uncharacterized protein from Ostreid herpesvirus 1 (isolate France) (OsHV-1).